Here is a 351-residue protein sequence, read N- to C-terminus: Small ribosomal subunit protein uS2 (351 aa).

Residues 302 to 351 form a disordered region; it reads QNNYDPSKRGYNPKYVNHKSTFNKFNNKKPAEATSQAKTNEKIVIKAETN. A compositionally biased stretch (basic and acidic residues) spans 340–351; the sequence is TNEKIVIKAETN.

It belongs to the universal ribosomal protein uS2 family.

The sequence is that of Small ribosomal subunit protein uS2 from Ureaplasma urealyticum serovar 10 (strain ATCC 33699 / Western).